The sequence spans 149 residues: 3-dehydroquinate dehydratase (149 aa).

Y26 serves as the catalytic Proton acceptor. Residues N77, H83, and D90 each contribute to the substrate site. H103 serves as the catalytic Proton donor. Substrate is bound by residues 104-105 (LS) and R114.

This sequence belongs to the type-II 3-dehydroquinase family. Homododecamer.

The enzyme catalyses 3-dehydroquinate = 3-dehydroshikimate + H2O. It functions in the pathway metabolic intermediate biosynthesis; chorismate biosynthesis; chorismate from D-erythrose 4-phosphate and phosphoenolpyruvate: step 3/7. Catalyzes a trans-dehydration via an enolate intermediate. This is 3-dehydroquinate dehydratase from Haemophilus influenzae (strain PittEE).